We begin with the raw amino-acid sequence, 145 residues long: Antimicrobial peptide NK-lysin (145 aa).

An N-terminal signal peptide occupies residues 1 to 22; it reads MTSRALLLLASALLGTPGLTFS. The propeptide occupies 23-62; sequence GLNPESYDLATAHLSDGEQFCQGLTQEDLQGDLLTERERQ. Residues 62-142 enclose the Saposin B-type domain; that stretch reads QGIACWSCRK…VDIKLCKHKA (81 aa). Cystine bridges form between Cys66/Cys138, Cys69/Cys132, and Cys97/Cys107. Residues 141–145 constitute a propeptide that is removed on maturation; sequence KAGLI.

Its subcellular location is the secreted. Functionally, may be an effector molecule of cytotoxic activity. Has antimicrobial activity. In Equus caballus (Horse), this protein is Antimicrobial peptide NK-lysin (NKL).